A 213-amino-acid chain; its full sequence is Probable nicotinate-nucleotide adenylyltransferase (213 aa).

It belongs to the NadD family.

It catalyses the reaction nicotinate beta-D-ribonucleotide + ATP + H(+) = deamido-NAD(+) + diphosphate. It participates in cofactor biosynthesis; NAD(+) biosynthesis; deamido-NAD(+) from nicotinate D-ribonucleotide: step 1/1. Functionally, catalyzes the reversible adenylation of nicotinate mononucleotide (NaMN) to nicotinic acid adenine dinucleotide (NaAD). The protein is Probable nicotinate-nucleotide adenylyltransferase of Escherichia coli O139:H28 (strain E24377A / ETEC).